A 469-amino-acid chain; its full sequence is Solute carrier family 52, riboflavin transporter, member 3 (469 aa).

The Cytoplasmic portion of the chain corresponds to 1–2 (MA). Residues 3 to 23 (FLMHLLVCVFGMGSWVTINGL) traverse the membrane as a helical segment. The Extracellular portion of the chain corresponds to 24–43 (WVELPLLVMELPEGWYLPSY). Residues 44–64 (LTVVIQLANIGPLLVTLLHHF) form a helical membrane-spanning segment. Topologically, residues 65 to 71 (RPSCLSE) are cytoplasmic. A helical membrane pass occupies residues 72-92 (VPIIFTLLGVGTVTCIIFAFL). Topologically, residues 93 to 97 (WNMTS) are extracellular. An N-linked (GlcNAc...) asparagine glycan is attached at asparagine 94. A helical transmembrane segment spans residues 98–118 (WVLDGHHSIAFLVLTFFLALV). The Cytoplasmic portion of the chain corresponds to 119–137 (DCTSSVTFLPFMSRLPTYY). Residues 138-158 (LTTFFVGEGLSGLLPALVALA) traverse the membrane as a helical segment. Topologically, residues 159–220 (QGSGLTTCVN…SRYLPAHFSP (62 aa)) are extracellular. A glycan (N-linked (GlcNAc...) asparagine) is linked at asparagine 168. Residues 221 to 241 (LVFFLLLSIMMACCLVAFFVL) form a helical membrane-spanning segment. Over 242-292 (QRQPRCWEASVEDLLNDQVTLHSIRPREENDLGPAGTVDSSQGQGYLEEKA) the chain is Cytoplasmic. Serine 251 is subject to Phosphoserine. Residues 293 to 313 (APCCPAHLAFIYTLVAFVNAL) traverse the membrane as a helical segment. At 314–335 (TNGMLPSVQTYSCLSYGPVAYH) the chain is on the extracellular side. The helical transmembrane segment at 336-356 (LAATLSIVANPLASLVSMFLP) threads the bilayer. The Cytoplasmic portion of the chain corresponds to 357–359 (NRS). Residues 360-380 (LLFLGVLSVLGTCFGGYNMAM) form a helical membrane-spanning segment. Residues 381–396 (AVMSPCPLLQGHWGGE) are Extracellular-facing. A disulfide bridge links cysteine 386 with cysteine 463. The chain crosses the membrane as a helical span at residues 397–417 (VLIVASWVLFSGCLSYVKVML). The Cytoplasmic portion of the chain corresponds to 418–427 (GVVLRDLSRS). The chain crosses the membrane as a helical span at residues 428-448 (ALLWCGAAVQLGSLLGALLMF). Topologically, residues 449-469 (PLVNVLRLFSSADFCNLHCPA) are extracellular.

The protein belongs to the riboflavin transporter family. As to expression, predominantly expressed in testis. Highly expressed in small intestine and prostate.

The protein localises to the apical cell membrane. Its subcellular location is the cell membrane. It is found in the nucleus membrane. It localises to the cytoplasm. The enzyme catalyses riboflavin(in) = riboflavin(out). Activity is strongly inhibited by riboflavin analogs, such as lumiflavin, flavin mononucleotide (FMN), flavin adenine dinucleotide (FAD), by methylene blue, and to a lesser extent by amiloride. Riboflavin transport is Na(+)-independent at low pH but significantly reduced by Na(+) depletion under neutral pH conditions. In terms of biological role, plasma membrane transporter mediating the uptake by cells of the water soluble vitamin B2/riboflavin that plays a key role in biochemical oxidation-reduction reactions of the carbohydrate, lipid, and amino acid metabolism. Humans are unable to synthesize vitamin B2/riboflavin and must obtain it via intestinal absorption. The polypeptide is Solute carrier family 52, riboflavin transporter, member 3 (SLC52A3) (Homo sapiens (Human)).